The following is a 445-amino-acid chain: E3 ubiquitin-protein ligase MYLIP (445 aa).

The FERM domain occupies Met1–Thr279. Residues Cys360, Cys363, and Cys368 each contribute to the Fe cation site. Residues Cys387–Arg422 form an RING-type zinc finger. The interval Val431–Leu433 is critical for homodimerization.

Homodimer. Interacts with the E2 ubiquitin-conjugating enzyme, UBE2D1 (via RING-type zinc finger). Interacts with myosin regulatory light chain (MRLC) and TMEM4. Post-translationally, autoubiquitinated. In terms of tissue distribution, ubiquitously expressed.

It is found in the cytoplasm. Its subcellular location is the cell membrane. It catalyses the reaction S-ubiquitinyl-[E2 ubiquitin-conjugating enzyme]-L-cysteine + [acceptor protein]-L-lysine = [E2 ubiquitin-conjugating enzyme]-L-cysteine + N(6)-ubiquitinyl-[acceptor protein]-L-lysine.. It participates in protein modification; protein ubiquitination. With respect to regulation, can bind 1 iron ion per dimer. Iron binding seems to decrease LDLR degradation activity. Its function is as follows. E3 ubiquitin-protein ligase that mediates ubiquitination and subsequent proteasomal degradation of myosin regulatory light chain (MRLC), LDLR, VLDLR and LRP8. Activity depends on E2 enzymes of the UBE2D family. Proteasomal degradation of MRLC leads to inhibit neurite outgrowth in presence of NGF by counteracting the stabilization of MRLC by saposin-like protein (CNPY2/MSAP) and reducing CNPY2-stimulated neurite outgrowth. Acts as a sterol-dependent inhibitor of cellular cholesterol uptake by mediating ubiquitination and subsequent degradation of LDLR. In Homo sapiens (Human), this protein is E3 ubiquitin-protein ligase MYLIP (MYLIP).